The primary structure comprises 294 residues: 4-hydroxy-tetrahydrodipicolinate synthase (294 aa).

Pyruvate is bound at residue Thr-45. Tyr-133 serves as the catalytic Proton donor/acceptor. Lys-161 acts as the Schiff-base intermediate with substrate in catalysis. A pyruvate-binding site is contributed by Ile-203.

The protein belongs to the DapA family. In terms of assembly, homotetramer; dimer of dimers.

The protein localises to the cytoplasm. It catalyses the reaction L-aspartate 4-semialdehyde + pyruvate = (2S,4S)-4-hydroxy-2,3,4,5-tetrahydrodipicolinate + H2O + H(+). The protein operates within amino-acid biosynthesis; L-lysine biosynthesis via DAP pathway; (S)-tetrahydrodipicolinate from L-aspartate: step 3/4. In terms of biological role, catalyzes the condensation of (S)-aspartate-beta-semialdehyde [(S)-ASA] and pyruvate to 4-hydroxy-tetrahydrodipicolinate (HTPA). The polypeptide is 4-hydroxy-tetrahydrodipicolinate synthase (Alcanivorax borkumensis (strain ATCC 700651 / DSM 11573 / NCIMB 13689 / SK2)).